Reading from the N-terminus, the 253-residue chain is NAC transcription factor 32 (253 aa).

In terms of domain architecture, NAC spans phenylalanine 10–lysine 160. Residues valine 106–lysine 166 mediate DNA binding.

Expressed in germinating seeds, roots, leaf veins, open flowers and silique stalks.

The protein resides in the nucleus. In terms of biological role, transcriptional activator that positively regulates age-dependent senescence, dark-induced leaf senescence and stress-induced senescence. Regulates leaf senescence through the modulation of the expression of senescence-associated genes SGR1/NYE1, SAG113 and SAUR36/SAG201, which are involved in chlorophyll degradation, and abscisic acid (ABA) and auxin promotion of senescence, respectively. Promotes reactive oxygen species (ROS) production during age-dependent and stress-induced senescence. Positively regulates auxin-mediated responses in roots. Stress-responsive NAC transcription factor involved in ABA-inducible leaf senescence signaling. Required for normal seed development and morphology. The sequence is that of NAC transcription factor 32 from Arabidopsis thaliana (Mouse-ear cress).